The chain runs to 348 residues: Probable WRKY transcription factor 27 (348 aa).

Disordered stretches follow at residues V19–S52, T67–P90, L133–R153, and G218–N320. Pro residues predominate over residues S75–A85. Residues L133–L142 show a composition bias toward low complexity. A compositionally biased stretch (basic residues) spans R143–R153. Positions T159–P225 form a DNA-binding region, WRKY. The segment covering R228–V242 has biased composition (polar residues). The segment covering D274 to D315 has biased composition (acidic residues).

Belongs to the WRKY group II-e family.

Its subcellular location is the nucleus. Functionally, transcription factor. Interacts specifically with the W box (5'-(T)TGAC[CT]-3'), a frequently occurring elicitor-responsive cis-acting element. The sequence is that of Probable WRKY transcription factor 27 (WRKY27) from Arabidopsis thaliana (Mouse-ear cress).